The following is a 261-amino-acid chain: Kallikrein-1 (261 aa).

The N-terminal stretch at 1-18 is a signal peptide; sequence MRFLILFLALSLGGIDAA. Residues 19–24 constitute a propeptide, activation peptide; that stretch reads PPVQSR. In terms of domain architecture, Peptidase S1 spans 25 to 258; sequence IVGGFNCEKN…FNTWIRETMA (234 aa). Cystine bridges form between Cys31-Cys173, Cys50-Cys66, Cys152-Cys219, Cys184-Cys198, and Cys209-Cys234. The Charge relay system role is filled by His65. N-linked (GlcNAc...) asparagine glycosylation occurs at Asn102. The active-site Charge relay system is Asp120. The Charge relay system role is filled by Ser213.

It belongs to the peptidase S1 family. Kallikrein subfamily.

The enzyme catalyses Preferential cleavage of Arg-|-Xaa bonds in small molecule substrates. Highly selective action to release kallidin (lysyl-bradykinin) from kininogen involves hydrolysis of Met-|-Xaa or Leu-|-Xaa.. Its function is as follows. Glandular kallikreins cleave Met-Lys and Arg-Ser bonds in kininogen to release Lys-bradykinin. The chain is Kallikrein-1 (Klk1) from Mus musculus (Mouse).